A 190-amino-acid polypeptide reads, in one-letter code: Cytoglobin (190 aa).

The Globin domain occupies 18–167 (ELSEAERKAV…IYSHVTAAYK (150 aa)). Residues cysteine 38 and cysteine 83 are joined by a disulfide bond. Histidine 81 and histidine 113 together coordinate heme b.

The protein belongs to the globin family. Monomeric. Homodimer; disulfide-linked in vitro. Also homooligomeric in vitro. The formation of an intramolecular disulfide bond between cysteines Cys-38 and Cys-83 specifically enhances the nitrite reductase activity. Widely expressed. Highest expression in heart, stomach, bladder and small intestine.

It is found in the cytoplasm. The protein resides in the nucleus. It carries out the reaction Fe(II)-heme b-[protein] + nitric oxide + O2 = Fe(III)-heme b-[protein] + nitrate. The catalysed reaction is Fe(III)-heme b-[protein] + nitric oxide + H2O = Fe(II)-heme b-[protein] + nitrite + 2 H(+). The enzyme catalyses 2 superoxide + 2 H(+) = H2O2 + O2. It catalyses the reaction H2O2 + AH2 = A + 2 H2O. With respect to regulation, the nitric oxide dioxygenase activity is activated by a reducing system composed of cytochrome b5, its upstream reductase CYB5R3 and NADH. Functionally, probable multifunctional globin with a hexacoordinated heme iron required for the catalysis of various reactions depending on redox condition of the cell as well as oxygen availability. Has a nitric oxide dioxygenase (NOD) activity and is most probably involved in cell-mediated and oxygen-dependent nitric oxide consumption. By scavenging this second messenger may regulate several biological processes including endothelium-mediated vasodilation and vascular tone. Under normoxic conditions functions as a nitric oxide dioxygenase (NOD) but under hypoxic conditions the globin may switch its function to that of a nitrite (NO2) reductase (NiR), generating nitric oxide. Could also have peroxidase and superoxide dismutase activities, detoxifying reactive oxygen species and protecting cells against oxidative stress. Also binds dioxygen with low affinity and could function as an oxygen sensor but has probably no function as a respiratory oxygen carrier. This chain is Cytoglobin, found in Homo sapiens (Human).